Here is a 347-residue protein sequence, read N- to C-terminus: Heat-inducible transcription repressor HrcA (347 aa).

This sequence belongs to the HrcA family.

Functionally, negative regulator of class I heat shock genes (grpE-dnaK-dnaJ and groELS operons). Prevents heat-shock induction of these operons. This is Heat-inducible transcription repressor HrcA from Lactococcus lactis subsp. lactis (strain IL1403) (Streptococcus lactis).